Reading from the N-terminus, the 148-residue chain is UPF0756 membrane protein NMA2160 (148 aa).

The next 4 helical transmembrane spans lie at 13–35, 50–70, 80–100, and 121–141; these read LILLGVVSNNNSITISATILLLM, HGLNLGIILLTIGVLSPLVSG, FLNFKMISAVFIGIFVAWLAG, and VIGVAFMGGIPVGPLIAAGIL.

Belongs to the UPF0756 family.

The protein resides in the cell membrane. The chain is UPF0756 membrane protein NMA2160 from Neisseria meningitidis serogroup A / serotype 4A (strain DSM 15465 / Z2491).